The sequence spans 80 residues: MAARALCMLGLVLALLSSSSAEEYVGLSANQCAVPAKDRVDCGYPHVTPKECNNRGCCFDSRIPGVPWCFKPLQEAECTF.

The signal sequence occupies residues 1–21 (MAARALCMLGLVLALLSSSSA). Positions 30 to 73 (NQCAVPAKDRVDCGYPHVTPKECNNRGCCFDSRIPGVPWCFKPL) constitute a P-type domain. Cystine bridges form between C32–C58, C42–C57, and C52–C69.

In terms of assembly, monomer. Homodimer; disulfide-linked. Expressed in goblet cells of the intestines and colon (at protein level). Expressed by goblet cells of small and large intestinal epithelia and also by the uterus. Also expressed in the hypothalamus where it is detected in paraventricular, periventricular and supraoptic nuclei (at protein level).

The protein resides in the secreted. It is found in the extracellular space. It localises to the extracellular matrix. The protein localises to the cytoplasm. Involved in the maintenance and repair of the intestinal mucosa. Promotes the mobility of epithelial cells in healing processes (motogen). In Homo sapiens (Human), this protein is Trefoil factor 3 (TFF3).